We begin with the raw amino-acid sequence, 721 residues long: Dipeptidyl-peptidase 5 (721 aa).

A signal peptide spans 1 to 18; the sequence is MGAFRWLSIAAAASTALA. N75, N94, N151, and N254 each carry an N-linked (GlcNAc...) asparagine glycan. Positions 271–297 are disordered; it reads ARPINGPDSPGTPKGIKGDSSSPVFSP. N380 and N450 each carry an N-linked (GlcNAc...) asparagine glycan. S560 serves as the catalytic Charge relay system. N607 carries an N-linked (GlcNAc...) asparagine glycan. Residues D643 and H675 each act as charge relay system in the active site.

It belongs to the peptidase S9C family. Post-translationally, N-glycosylated. As to expression, expressed in mycelia and conidia.

Its subcellular location is the secreted. In terms of biological role, may be involved in metabolism of dipeptides or may affect host defense mechanisms. Has a substrate specificity limited to the hydrolysis of X-Ala, His-Ser, and Ser-Tyr dipeptides at a neutral pH optimum. The polypeptide is Dipeptidyl-peptidase 5 (Aspergillus fumigatus (strain CBS 144.89 / FGSC A1163 / CEA10) (Neosartorya fumigata)).